Consider the following 278-residue polypeptide: MNPYIVLLKPRVIWLLILSSVVGYVYAAGTVDWGRLAALTAAATLAVGGSAAFNHYWERDIDAAMARTARRPLPAGAIPPSNALVYSLALSATGILLGFYLLGPLPGVFVALGWFFYAVVYTVWLKRRTWLNILGGGFAGNATFLGGYALGKGTVDLPAVLISFAIYLWIPSHIWALAYKYREDYRRAGVPMLPAIIDEGKAVAIISALNIASAAYILWLYLVFGRGLPGLALVLAGVAGTVATSALALREKSDRAMWRMYKASSPILTLFLLALVFS.

9 consecutive transmembrane segments (helical) span residues 12-32 (VIWL…GTVD), 36-56 (LAAL…FNHY), 72-92 (PLPA…ALSA), 105-124 (LPGV…YTVW), 130-150 (WLNI…GYAL), 157-177 (LPAV…IWAL), 204-224 (AIIS…YLVF), 228-248 (LPGL…SALA), and 257-277 (MWRM…ALVF).

This sequence belongs to the UbiA prenyltransferase family. Protoheme IX farnesyltransferase subfamily.

The protein localises to the cell membrane. The catalysed reaction is heme b + (2E,6E)-farnesyl diphosphate + H2O = Fe(II)-heme o + diphosphate. The protein operates within porphyrin-containing compound metabolism; heme O biosynthesis; heme O from protoheme: step 1/1. In terms of biological role, converts heme B (protoheme IX) to heme O by substitution of the vinyl group on carbon 2 of heme B porphyrin ring with a hydroxyethyl farnesyl side group. The sequence is that of Protoheme IX farnesyltransferase from Pyrobaculum neutrophilum (strain DSM 2338 / JCM 9278 / NBRC 100436 / V24Sta) (Thermoproteus neutrophilus).